A 469-amino-acid polypeptide reads, in one-letter code: Programmed cell death protein 4 (469 aa).

Residue methionine 1 is modified to N-acetylmethionine. Over residues methionine 1 to leucine 23 the composition is skewed to polar residues. 2 disordered regions span residues methionine 1–lysine 37 and lysine 58–glycine 128. Serine 25 bears the Phosphoserine mark. Positions lysine 58 to arginine 64 match the Nuclear localization signal motif. Serine 67 is subject to Phosphoserine; by PKB and RPS6KB1. Residues serine 68, serine 71, serine 76, serine 78, and serine 94 each carry the phosphoserine modification. A Phosphodegron motif is present at residues aspartate 70 to serine 76. The segment covering lysine 114 to glycine 125 has biased composition (gly residues). Tyrosine 152 is subject to Phosphotyrosine. The 122-residue stretch at alanine 163 to glycine 284 folds into the MI 1 domain. A phosphoserine mark is found at serine 313 and serine 317. The region spanning histidine 326–serine 449 is the MI 2 domain. Positions proline 448–arginine 454 match the Nuclear localization signal motif. Serine 457 bears the Phosphoserine; by PKB mark.

Belongs to the PDCD4 family. As to quaternary structure, interacts (via MI domains) with EIF4A1 and EIF4A2 (via N-terminal domain). Heterotrimer with EIF4A1; one molecule of PDCD4 binds two molecules of EIF4A1. Interacts with EIF4G1. May form a complex with EIF4A1 and EIF4G1. The interaction between PDCD4 and EIF4A1 interferes with the interaction between EIF4A1 and EIF4G. When phosphorylated, interacts with BTRC and FBXW11. In terms of processing, polyubiquitinated, leading to its proteasomal degradation. Rapidly degraded in response to mitogens. Phosphorylation of the phosphodegron promotes interaction with BTRC and proteasomal degradation. Phosphorylated at Ser-67 by RPS6KB1 in response to mitogens; phosphorylation promotes proteasomal degradation of PDCD4. Expressed ubiquitously. Highyly expressed in thymus and liver. Moderately expressed in brain, kidney and spleen; weakly in lung and heart. Expression is up- or down-regulated in response to apoptosis inducers. Regulated by many programmed cell death-inducing stimuli.

It is found in the nucleus. It localises to the cytoplasm. Functionally, inhibits translation initiation and cap-dependent translation. May excert its function by hindering the interaction between EIF4A1 and EIF4G. Inhibits the helicase activity of EIF4A. Modulates the activation of JUN kinase. Down-regulates the expression of MAP4K1, thus inhibiting events important in driving invasion, namely, MAPK85 activation and consequent JUN-dependent transcription. May play a role in apoptosis. Tumor suppressor. Inhibits tumor promoter-induced neoplastic transformation. Binds RNA. This chain is Programmed cell death protein 4 (Pdcd4), found in Mus musculus (Mouse).